Reading from the N-terminus, the 421-residue chain is 3-isopropylmalate dehydratase large subunit (421 aa).

Positions 302, 362, and 365 each coordinate [4Fe-4S] cluster.

It belongs to the aconitase/IPM isomerase family. LeuC type 2 subfamily. As to quaternary structure, heterodimer of LeuC and LeuD. The cofactor is [4Fe-4S] cluster.

The enzyme catalyses (2R,3S)-3-isopropylmalate = (2S)-2-isopropylmalate. It functions in the pathway amino-acid biosynthesis; L-leucine biosynthesis; L-leucine from 3-methyl-2-oxobutanoate: step 2/4. In terms of biological role, catalyzes the isomerization between 2-isopropylmalate and 3-isopropylmalate, via the formation of 2-isopropylmaleate. This Campylobacter curvus (strain 525.92) protein is 3-isopropylmalate dehydratase large subunit.